Consider the following 269-residue polypeptide: Leucinostatins biosynthesis cluster protein T (269 aa).

A signal peptide spans 1-15 (MHIILTGTGLVGAIA). N-linked (GlcNAc...) asparagine glycosylation is present at N254.

Its function is as follows. Part of the gene cluster that mediates the biosynthesis of the lipopeptide antibiotics leucinostatins that show extensive biological activities, including antimalarial, antiviral, antibacterial, antifungal, and antitumor activities, as well as phytotoxic. The function of lcsT within the leucinostatins biosynthesis has not been identified yet. The sequence is that of Leucinostatins biosynthesis cluster protein T from Purpureocillium lilacinum (Paecilomyces lilacinus).